Reading from the N-terminus, the 278-residue chain is Orotidine 5'-phosphate decarboxylase (278 aa).

Substrate-binding positions include aspartate 40, 62–64 (KTH), 93–102 (DRKFIDIGNT), tyrosine 228, and arginine 246. Catalysis depends on lysine 95, which acts as the Proton donor.

This sequence belongs to the OMP decarboxylase family.

It catalyses the reaction orotidine 5'-phosphate + H(+) = UMP + CO2. Its pathway is pyrimidine metabolism; UMP biosynthesis via de novo pathway; UMP from orotate: step 2/2. The chain is Orotidine 5'-phosphate decarboxylase (PYR1) from Passalora fulva (Tomato leaf mold).